The chain runs to 299 residues: UDP-N-acetylenolpyruvoylglucosamine reductase (299 aa).

The region spanning 21-189 is the FAD-binding PCMH-type domain; that stretch reads RVGGPAQWLL…LSARFRLEPG (169 aa). R168 is a catalytic residue. S219 functions as the Proton donor in the catalytic mechanism. Residue E289 is part of the active site.

The protein belongs to the MurB family. FAD serves as cofactor.

Its subcellular location is the cytoplasm. It carries out the reaction UDP-N-acetyl-alpha-D-muramate + NADP(+) = UDP-N-acetyl-3-O-(1-carboxyvinyl)-alpha-D-glucosamine + NADPH + H(+). The protein operates within cell wall biogenesis; peptidoglycan biosynthesis. Its function is as follows. Cell wall formation. In Parasynechococcus marenigrum (strain WH8102), this protein is UDP-N-acetylenolpyruvoylglucosamine reductase.